Here is a 201-residue protein sequence, read N- to C-terminus: Holliday junction branch migration complex subunit RuvA (201 aa).

The domain I stretch occupies residues 1-64; that stretch reads MYAYIRGKLT…EDAQLLYGFI (64 aa). Residues 65 to 143 are domain II; sequence NEEEKDMFLS…ITRETTETLL (79 aa). The tract at residues 144–150 is flexible linker; it reads SMNEENS. Residues 151 to 201 form a domain III region; sequence NSENLVKEALLALEALGYSKREISKVEKVLNKSTFDSVDEAVKLGLKTLVS.

It belongs to the RuvA family. As to quaternary structure, homotetramer. Forms an RuvA(8)-RuvB(12)-Holliday junction (HJ) complex. HJ DNA is sandwiched between 2 RuvA tetramers; dsDNA enters through RuvA and exits via RuvB. An RuvB hexamer assembles on each DNA strand where it exits the tetramer. Each RuvB hexamer is contacted by two RuvA subunits (via domain III) on 2 adjacent RuvB subunits; this complex drives branch migration. In the full resolvosome a probable DNA-RuvA(4)-RuvB(12)-RuvC(2) complex forms which resolves the HJ.

Its subcellular location is the cytoplasm. In terms of biological role, the RuvA-RuvB-RuvC complex processes Holliday junction (HJ) DNA during genetic recombination and DNA repair, while the RuvA-RuvB complex plays an important role in the rescue of blocked DNA replication forks via replication fork reversal (RFR). RuvA specifically binds to HJ cruciform DNA, conferring on it an open structure. The RuvB hexamer acts as an ATP-dependent pump, pulling dsDNA into and through the RuvAB complex. HJ branch migration allows RuvC to scan DNA until it finds its consensus sequence, where it cleaves and resolves the cruciform DNA. In Staphylococcus haemolyticus (strain JCSC1435), this protein is Holliday junction branch migration complex subunit RuvA.